A 336-amino-acid polypeptide reads, in one-letter code: Homeobox-leucine zipper protein HAT14 (336 aa).

2 disordered regions span residues 53-141 (RSLS…PDSV) and 160-194 (SNKR…KLRL). Residues 64–81 (EDEKKKPAPRAKKSDEFR) show a composition bias toward basic and acidic residues. The segment covering 120-129 (VEEEEEEEEA) has biased composition (acidic residues). Low complexity predominate over residues 130–141 (VPSMSVSPPDSV). Residues 160–173 (SNKRDIDDEVERSA) are compositionally biased toward basic and acidic residues. A DNA-binding region (homeobox) is located at residues 187 to 246 (STRKKLRLSKDQSAFLEDSFKEHSTLNPKQKIALAKQLNLRPRQVEVWFQNRRARTKLKQ). Positions 254–275 (LKRCCESLTEENRRLQKEVKEL) are leucine-zipper.

The protein belongs to the HD-ZIP homeobox family. Class II subfamily.

It is found in the nucleus. Probable transcription factor. The protein is Homeobox-leucine zipper protein HAT14 (HAT14) of Arabidopsis thaliana (Mouse-ear cress).